Here is a 262-residue protein sequence, read N- to C-terminus: Virulence regulon transcriptional activator VirF (262 aa).

Residues 161 to 258 enclose the HTH araC/xylS-type domain; sequence DQIRKIVEKN…GITPKKFYLY (98 aa). DNA-binding regions (H-T-H motif) lie at residues 178–199 and 225–248; these read SDIS…ESEK and INDV…NEYY.

As to quaternary structure, homodimer.

Its function is as follows. Primary regulator of plasmid-encoded virulence genes. Activates the transcription of icsA (virG) and of virB, which is an activator of the ipaABCD virulence regulon. The chain is Virulence regulon transcriptional activator VirF (virF) from Shigella dysenteriae.